The sequence spans 153 residues: Large ribosomal subunit protein uL15 (153 aa).

The segment at Met-1 to Ala-42 is disordered. The span at Arg-21 to Cys-31 shows a compositional bias: gly residues.

The protein belongs to the universal ribosomal protein uL15 family. In terms of assembly, part of the 50S ribosomal subunit.

Its function is as follows. Binds to the 23S rRNA. The protein is Large ribosomal subunit protein uL15 of Nitrosomonas eutropha (strain DSM 101675 / C91 / Nm57).